The chain runs to 507 residues: Monoogygenase CPUR_05431 (507 aa).

It belongs to the PheA/TfdB FAD monooxygenase family. It depends on FAD as a cofactor.

It functions in the pathway pigment biosynthesis. Its function is as follows. Monoogygenase; part of the ergochrome gene cluster responsible for the typical purple-black color of the ergot sclerotia. The ergochrome gene cluster produces several ergot pigments including the yellow ergochrome secalonic acid and its derivatives, as well as the red anthraquinones endocrocin and clavorubin. The pathway begins with the synthesis of atrochrysone thioester by the polyketide synthase (PKS) CPUR_05437. The atrochrysone carboxyl ACP thioesterase CPUR_05436 then breaks the thioester bond and releases the atrochrysone carboxylic acid from CPUR_05437. The atrochrysone carboxylic acid is then converted to atrochrysone which is further transformed into emodin anthrone. The next step is performed by the anthrone oxygenase CPUR_05434 that catalyzes the oxidation of emodinanthrone to emodin. Emodin is further modified to yield monodictyphenone via several steps involving CPUR_05427, CPUR_05428, CPUR_05429 and CPUR_05430. The short chain dehydrogenase/reductase CPUR_05418 then catalyzes the C-5 ketoreduction to give the xanthone skeleton of the monomeric units. Ergochromes formation requires further dimerization steps of different xanthone units, probably catalyzed by the cytochrome P450 monooxygenase CPUR_05419. CPUR_05425, CPUR_05426 and CPUR_05431 are unique to Claviceps, thus it is likely that they are involved in further modification of xanthone units or in their dimerization. The yellow ergochromes and the red anthraquinone pigments endocrocin and clavorubin are products from the same PKS derived precursors and the latter are likely shunt products in the pathway of xanthone biosynthesis. It is proposed that atrochrysone carboxylic acid released from the PKS CPUR_05437 can also be converted to endocrocin anthrone which is further oxidized into endocrocin by CPUR_05435. Endocrocin could be then modified to clavorubin, possibly by CPUR_05423 and CPUR_05431. Clavorubin is the principal anthraquinone metabolite produced by the cluster with a much higher yield compared to endocrocin. In Claviceps purpurea (strain 20.1) (Ergot fungus), this protein is Monoogygenase CPUR_05431.